Consider the following 270-residue polypeptide: tRNA pseudouridine synthase A (270 aa).

Residue aspartate 51 is the Nucleophile of the active site. Residue tyrosine 109 coordinates substrate.

Belongs to the tRNA pseudouridine synthase TruA family. As to quaternary structure, homodimer.

The catalysed reaction is uridine(38/39/40) in tRNA = pseudouridine(38/39/40) in tRNA. Formation of pseudouridine at positions 38, 39 and 40 in the anticodon stem and loop of transfer RNAs. The chain is tRNA pseudouridine synthase A from Burkholderia vietnamiensis (strain G4 / LMG 22486) (Burkholderia cepacia (strain R1808)).